Reading from the N-terminus, the 432-residue chain is PC-esterase domain-containing protein 1B (432 aa).

Disordered stretches follow at residues 273–312 and 407–432; these read WESS…SPGL and GPYM…SRPQ. Polar residues predominate over residues 285–294; the sequence is QDNIGPQFAQ. Residues 296–312 are compositionally biased toward pro residues; that stretch reads PPYPFPRPPPLLPSPGL.

It belongs to the PC-esterase family.

In Rattus norvegicus (Rat), this protein is PC-esterase domain-containing protein 1B (Pced1b).